Here is a 157-residue protein sequence, read N- to C-terminus: SUMO-conjugating enzyme UBC9 (157 aa).

Position 2 is an N-acetylserine (Ser2). Positions 4–157 constitute a UBC core domain; that stretch reads LCLQRLQEER…VLLQAKQYSK (154 aa). Cys93 serves as the catalytic Glycyl thioester intermediate.

This sequence belongs to the ubiquitin-conjugating enzyme family. As to quaternary structure, interacts with SIZ1.

Its subcellular location is the nucleus. It functions in the pathway protein modification; protein sumoylation. Functionally, E2 ubiquitin-like--protein ligase mediating SUMO/Smt3 attachment to septins and PCNA. Seems to be involved in degradation of S- (CLB5) and M-phase cyclins (CLB2). The protein is SUMO-conjugating enzyme UBC9 (UBC9) of Saccharomyces cerevisiae (strain ATCC 204508 / S288c) (Baker's yeast).